Consider the following 3312-residue polypeptide: MMARRPPWRGLGGRSTPILLLLLLSLFPLSQEELGGGGHQGWDPGLAATTGPRAHIGGGALALCPESSGVREDGGPGLGVREPIFVGLRGRRQSARNSRGPPEQPNEELGIEHGVQPLGSRERETGQGPGSVLYWRPEVSSCGRTGPLQRGSLSPGALSSGVPGSGNSSPLPSDFLIRHHGPKPVSSQRNAGTGSRKRVGTARCCGELWATGSKGQGERATTSGAERTAPRRNCLPGASGSGPELDSAPRTARTAPASGSAPRESRTAPEPAPKRMRSRGLFRCRFLPQRPGPRPPGLPARPEARKVTSANRARFRRAANRHPQFPQYNYQTLVPENEAAGTAVLRVVAQDPDAGEAGRLVYSLAALMNSRSLELFSIDPQSGLIRTAAALDRESMERHYLRVTAQDHGSPRLSATTMVAVTVADRNDHSPVFEQAQYRETLRENVEEGYPILQLRATDGDAPPNANLRYRFVGPPAARAAAAAAFEIDPRSGLISTSGRVDREHMESYELVVEASDQGQEPGPRSATVRVHITVLDENDNAPQFSEKRYVAQVREDVRPHTVVLRVTATDRDKDANGLVHYNIISGNSRGHFAIDSLTGEIQVVAPLDFEAEREYALRIRAQDAGRPPLSNNTGLASIQVVDINDHIPIFVSTPFQVSVLENAPLGHSVIHIQAVDADHGENARLEYSLTGVAPDTPFVINSATGWVSVSGPLDRESVEHYFFGVEARDHGSPPLSASASVTVTVLDVNDNRPEFTMKEYHLRLNEDAAVGTSVVSVTAVDRDANSAISYQITGGNTRNRFAISTQGGVGLVTLALPLDYKQERYFKLVLTASDRALHDHCYVHINITDANTHRPVFQSAHYSVSVNEDRPMGSTIVVISASDDDVGENARITYLLEDNLPQFRIDADSGAITLQAPLDYEDQVTYTLAITARDNGIPQKADTTYVEVMVNDVNDNAPQFVASHYTGLVSEDAPPFTSVLQISATDRDAHANGRVQYTFQNGEDGDGDFTIEPTSGIVRTVRRLDREAVSVYELTAYAVDRGVPPLRTPVSIQVMVQDVNDNAPVFPAEEFEVRVKENSIVGSVVAQITAVDPDEGPNAHIMYQIVEGNIPELFQMDIFSGELTALIDLDYEARQEYVIVVQATSAPLVSRATVHVRLVDQNDNSPVLNNFQILFNNYVSNRSDTFPSGIIGRIPAYDPDVSDHLFYSFERGNELQLLVVNQTSGELRLSRKLDNNRPLVASMLVTVTDGLHSVTAQCVLRVVIITEELLANSLTVRLENMWQERFLSPLLGRFLEGVAAVLATPAEDVFIFNIQNDTDVGGTVLNVSFSALAPRGAGAGAAGPWFSSEELQEQLYVRRAALAARSLLDVLPFDDNVCLREPCENYMKCVSVLRFDSSAPFLASASTLFRPIQPIAGLRCRCPPGFTGDFCETELDLCYSNPCRNGGACARREGGYTCVCRPRFTGEDCELDTEAGRCVPGVCRNGGTCTDAPNGGFRCQCPAGGAFEGPRCEVAARSFPPSSFVMFRGLRQRFHLTLSLSFATVQQSGLLFYNGRLNEKHDFLALELVAGQVRLTYSTGESNTVVSPTVPGGLSDGQWHTVHLRYYNKPRTDALGGAQGPSKDKVAVLSVDDCDVAVALQFGAEIGNYSCAAAGVQTSSKKSLDLTGPLLLGGVPNLPENFPVSHKDFIGCMRDLHIDGRRVDMAAFVANNGTMAGCQAKLHFCDSGPCKNSGFCSERWGSFSCDCPVGFGGKDCQLTMAHPHHFRGNGTLSWNFGSDMAVSVPWYLGLAFRTRATQGVLMQVQAGPHSTLLCQLDRGLLSVTVTRGSGRASHLLLDQVTVSDGRWHDLRLELQEEPGGRRGHHVLMVSLDFSLFQDTMAVGSELQGLKVKQLHVGGLPPGSAEEAPQGLVGCIQGVWLGSTPSGSPALLPPSHRVNAEPGCVVTNACASGPCPPHADCRDLWQTFSCTCQPGYYGPGCVDACLLNPCQNQGSCRHLPGAPHGYTCDCVGGYFGHHCEHRMDQQCPRGWWGSPTCGPCNCDVHKGFDPNCNKTNGQCHCKEFHYRPRGSDSCLPCDCYPVGSTSRSCAPHSGQCPCRPGALGRQCNSCDSPFAEVTASGCRVLYDACPKSLRSGVWWPQTKFGVLATVPCPRGALGAAVRLCDEAQGWLEPDLFNCTSPAFRELSLLLDGLELNKTALDTMEAKKLAQRLREVTGHTDHYFSQDVRVTARLLAHLLAFESHQQGFGLTATQDAHFNENLLWAGSALLAPETGDLWAALGQRAPGGSPGSAGLVRHLEEYAATLARNMELTYLNPMGLVTPNIMLSIDRMEHPSSPRGARRYPRYHSNLFRGQDAWDPHTHVLLPSQSPRPSPSEVLPTSSSIENSTTSSVVPPPAPPEPEPGISIIILLVYRTLGGLLPAQFQAERRGARLPQNPVMNSPVVSVAVFHGRNFLRGILESPISLEFRLLQTANRSKAICVQWDPPGLAEQHGVWTARDCELVHRNGSHARCRCSRTGTFGVLMDASPRERLEGDLELLAVFTHVVVAVSVAALVLTAAILLSLRSLKSNVRGIHANVAAALGVAELLFLLGIHRTHNQLVCTAVAILLHYFFLSTFAWLFVQGLHLYRMQVEPRNVDRGAMRFYHALGWGVPAVLLGLAVGLDPEGYGNPDFCWISVHEPLIWSFAGPVVLVIVMNGTMFLLAARTSCSTGQREAKKTSALTLRSSFLLLLLVSASWLFGLLAVNHSILAFHYLHAGLCGLQGLAVLLLFCVLNADARAAWMPACLGRKAAPEEARPAPGLGPGAYNNTALFEESGLIRITLGASTVSSVSSARSGRTQDQDSQRGRSYLRDNVLVRHGSAADHTDHSLQAHAGPTDLDVAMFHRDAGADSDSDSDLSLEEERSLSIPSSESEDNGRTRGRFQRPLCRAAQSERLLTHPKDVDGNDLLSYWPALGECEAAPCALQTWGSERRLGLDTSKDAANNNQPDPALTSGDETSLGRAQRQRKGILKNRLQYPLVPQTRGAPELSWCRAATLGHRAVPAASYGRIYAGGGTGSLSQPASRYSSREQLDLLLRRQLSRERLEEAPAPVLRPLSRPGSQECMDAAPGRLEPKDRGSTLPRRQPPRDYPGAMAGRFGSRDALDLGAPREWLSTLPPPRRTRDLDPQPPPLPLSPQRQLSRDPLLPSRPLDSLSRSSNSREQLDQVPSRHPSREALGPLPQLLRAREDSVSGPSHGPSTEQLDILSSILASFNSSALSSVQSSSTPLGPHTTATPSATASVLGPSTPRSATSHSISELSPDSEVPRSEGHS.

Positions 1-32 (MMARRPPWRGLGGRSTPILLLLLLSLFPLSQE) are cleaved as a signal peptide. Residues 33 to 2540 (ELGGGGHQGW…RLEGDLELLA (2508 aa)) are Extracellular-facing. Disordered regions lie at residues 90–112 (GRRQ…LGIE), 143–199 (GRTG…RKRV), and 212–306 (GSKG…EARK). Residues 159 to 173 (SSGVPGSGNSSPLPS) show a composition bias toward low complexity. The span at 290–299 (RPGPRPPGLP) shows a compositional bias: pro residues. 9 consecutive Cadherin domains span residues 326-433 (PQYN…SPVF), 434-545 (EQAQ…APQF), 546-651 (SEKR…IPIF), 652-756 (VSTP…RPEF), 757-858 (TMKE…RPVF), 859-961 (QSAH…APQF), 962-1067 (VASH…APVF), 1068-1169 (PAEE…SPVL), and 1170-1265 (NNFQ…RVVI). N-linked (GlcNAc...) asparagine glycosylation is present at Asn632. The N-linked (GlcNAc...) asparagine glycan is linked to Asn847. Residues Asn1182, Asn1222, Asn1317, and Asn1327 are each glycosylated (N-linked (GlcNAc...) asparagine). Residues 1375–1433 (DDNVCLREPCENYMKCVSVLRFDSSAPFLASASTLFRPIQPIAGLRCRCPPGFTGDFCE) form the EGF-like 1; calcium-binding domain. Intrachain disulfides connect Cys1379–Cys1390, Cys1384–Cys1421, Cys1423–Cys1432, Cys1439–Cys1450, Cys1444–Cys1459, Cys1461–Cys1470, Cys1479–Cys1490, Cys1484–Cys1500, and Cys1502–Cys1513. The EGF-like 2; calcium-binding domain maps to 1435-1471 (ELDLCYSNPCRNGGACARREGGYTCVCRPRFTGEDCE). The 40-residue stretch at 1475–1514 (EAGRCVPGVCRNGGTCTDAPNGGFRCQCPAGGAFEGPRCE) folds into the EGF-like 3; calcium-binding domain. One can recognise a Laminin G-like 1 domain in the interval 1515–1719 (VAARSFPPSS…VANNGTMAGC (205 aa)). 2 N-linked (GlcNAc...) asparagine glycosylation sites follow: Asn1649 and Asn1713. 4 disulfides stabilise this stretch: Cys1693/Cys1719, Cys1726/Cys1737, Cys1731/Cys1746, and Cys1748/Cys1757. The EGF-like 4; calcium-binding domain maps to 1722-1758 (KLHFCDSGPCKNSGFCSERWGSFSCDCPVGFGGKDCQ). A Laminin G-like 2 domain is found at 1764–1944 (PHHFRGNGTL…SHRVNAEPGC (181 aa)). N-linked (GlcNAc...) asparagine glycosylation occurs at Asn1770. Intrachain disulfides connect Cys1915–Cys1944, Cys1950–Cys1961, Cys1955–Cys1970, Cys1972–Cys1981, Cys1985–Cys1996, Cys1990–Cys2008, Cys2010–Cys2019, Cys2027–Cys2040, and Cys2042–Cys2052. The EGF-like 5; calcium-binding domain occupies 1946–1982 (VTNACASGPCPPHADCRDLWQTFSCTCQPGYYGPGCV). A (3R)-3-hydroxyaspartate modification is found at Asp1963. The EGF-like 6; calcium-binding domain occupies 1983–2020 (DACLLNPCQNQGSCRHLPGAPHGYTCDCVGGYFGHHCE). The region spanning 2021-2053 (HRMDQQCPRGWWGSPTCGPCNCDVHKGFDPNCN) is the EGF-like 7; calcium-binding domain. N-linked (GlcNAc...) asparagine glycosylation is present at Asn2053. One can recognise an EGF-like 8; calcium-binding domain in the interval 2055–2090 (TNGQCHCKEFHYRPRGSDSCLPCDCYPVGSTSRSCA). Intrachain disulfides connect Cys2059–Cys2074, Cys2061–Cys2077, Cys2079–Cys2089, Cys2098–Cys2107, and Cys2110–Cys2122. Positions 2077–2124 (CDCYPVGSTSRSCAPHSGQCPCRPGALGRQCNSCDSPFAEVTASGCRV) constitute a Laminin EGF-like domain. Tyr2126 carries the post-translational modification Phosphotyrosine. Residues Asn2177, Asn2196, Asn2386, Asn2474, and Asn2506 are each glycosylated (N-linked (GlcNAc...) asparagine). Positions 2361–2399 (THVLLPSQSPRPSPSEVLPTSSSIENSTTSSVVPPPAPP) are disordered. Positions 2368–2530 (QSPRPSPSEV…GVLMDASPRE (163 aa)) constitute a GAIN-B domain. Over residues 2380–2391 (TSSSIENSTTSS) the composition is skewed to low complexity. Intrachain disulfides connect Cys2480–Cys2512 and Cys2500–Cys2514. Positions 2480-2530 (CVQWDPPGLAEQHGVWTARDCELVHRNGSHARCRCSRTGTFGVLMDASPRE) are GPS. A helical transmembrane segment spans residues 2541 to 2561 (VFTHVVVAVSVAALVLTAAIL). Residues 2562-2572 (LSLRSLKSNVR) are Cytoplasmic-facing. The chain crosses the membrane as a helical span at residues 2573–2593 (GIHANVAAALGVAELLFLLGI). Residues 2594–2601 (HRTHNQLV) lie on the Extracellular side of the membrane. Residues 2602 to 2622 (CTAVAILLHYFFLSTFAWLFV) form a helical membrane-spanning segment. Over 2623–2643 (QGLHLYRMQVEPRNVDRGAMR) the chain is Cytoplasmic. The helical transmembrane segment at 2644–2664 (FYHALGWGVPAVLLGLAVGLD) threads the bilayer. Residues 2665–2681 (PEGYGNPDFCWISVHEP) are Extracellular-facing. A helical transmembrane segment spans residues 2682–2702 (LIWSFAGPVVLVIVMNGTMFL). The Cytoplasmic segment spans residues 2703–2725 (LAARTSCSTGQREAKKTSALTLR). Residues 2726 to 2746 (SSFLLLLLVSASWLFGLLAVN) form a helical membrane-spanning segment. At 2747–2753 (HSILAFH) the chain is on the extracellular side. The helical transmembrane segment at 2754-2774 (YLHAGLCGLQGLAVLLLFCVL) threads the bilayer. Residues 2775–3312 (NADARAAWMP…SEVPRSEGHS (538 aa)) lie on the Cytoplasmic side of the membrane. Disordered regions lie at residues 2888-2927 (AGAD…QRPL) and 2978-3006 (TSKD…AQRQ). A compositionally biased stretch (acidic residues) spans 2890 to 2900 (ADSDSDSDLSL). Position 3051 is a phosphotyrosine (Tyr3051). Disordered regions lie at residues 3086–3243 (EEAP…TEQL) and 3256–3312 (SALS…EGHS). Ser3097 carries the post-translational modification Phosphoserine. Low complexity-rich tracts occupy residues 3175 to 3198 (SPQR…SRSS), 3256 to 3265 (SALSSVQSSS), and 3272 to 3281 (TTATPSATAS). The span at 3287-3300 (TPRSATSHSISELS) shows a compositional bias: polar residues.

This sequence belongs to the G-protein coupled receptor 2 family. LN-TM7 subfamily.

It localises to the cell membrane. Receptor that may have an important role in cell/cell signaling during nervous system formation. In Homo sapiens (Human), this protein is Cadherin EGF LAG seven-pass G-type receptor 3 (CELSR3).